The following is a 159-amino-acid chain: Large ribosomal subunit protein uL11 (159 aa).

Belongs to the universal ribosomal protein uL11 family. In terms of assembly, part of the ribosomal stalk of the 50S ribosomal subunit. Interacts with L10 and the large rRNA to form the base of the stalk. L10 forms an elongated spine to which L12 dimers bind in a sequential fashion forming a multimeric L10(L12)X complex.

Its function is as follows. Forms part of the ribosomal stalk which helps the ribosome interact with GTP-bound translation factors. The polypeptide is Large ribosomal subunit protein uL11 (Nitrosopumilus maritimus (strain SCM1)).